The sequence spans 123 residues: Alpha-lactalbumin (123 aa).

The C-type lysozyme domain occupies 1 to 123 (KQFTKCELSQ…KLEQWLCEKE (123 aa)). 4 disulfide bridges follow: Cys-6–Cys-120, Cys-28–Cys-111, Cys-61–Cys-77, and Cys-73–Cys-91. Asn-45 carries an N-linked (GlcNAc...) asparagine glycan. Residues Lys-79, Asp-82, Asp-84, Asp-87, and Asp-88 each coordinate Ca(2+).

It belongs to the glycosyl hydrolase 22 family. In terms of assembly, lactose synthase (LS) is a heterodimer of a catalytic component, beta1,4-galactosyltransferase (beta4Gal-T1) and a regulatory component, alpha-lactalbumin (LA). In terms of tissue distribution, mammary gland specific. Secreted in milk.

Its subcellular location is the secreted. Functionally, regulatory subunit of lactose synthase, changes the substrate specificity of galactosyltransferase in the mammary gland making glucose a good acceptor substrate for this enzyme. This enables LS to synthesize lactose, the major carbohydrate component of milk. In other tissues, galactosyltransferase transfers galactose onto the N-acetylglucosamine of the oligosaccharide chains in glycoproteins. The sequence is that of Alpha-lactalbumin (LALBA) from Papio cynocephalus (Yellow baboon).